The chain runs to 305 residues: MHKLFILTGPTASGKSEVSKIVAERLGCTIINCDSKQIYQHVPTITDQAEYLRTSPQFRLYGYVHPSNSYSVGLWLEDAKREILLAWEKKSPTIVVGGSGLYISSLIYGLSEIPPADAHIRQKARALLSEVGNDTFFELLLRRDANVCKIDRRNSNQLLRAFEVFESTGVSIFSWRERCPKKRPFENCEVCVLFPPKEELHPKINSRLVDMINSSAVAEVEYLMSLNLPADAPIMKAIGVREVIEYLRGNISLPEAVEAAQRNTRQYAKRQYTWLRRQLPQDAQFLPTREEMVQHLVSRLTETEK.

Glycine 9–serine 16 is an ATP binding site. Threonine 11 to serine 16 is a substrate binding site. The segment at aspartate 34–glutamine 37 is interaction with substrate tRNA.

It belongs to the IPP transferase family. In terms of assembly, monomer. Mg(2+) is required as a cofactor.

The catalysed reaction is adenosine(37) in tRNA + dimethylallyl diphosphate = N(6)-dimethylallyladenosine(37) in tRNA + diphosphate. Catalyzes the transfer of a dimethylallyl group onto the adenine at position 37 in tRNAs that read codons beginning with uridine, leading to the formation of N6-(dimethylallyl)adenosine (i(6)A). This chain is tRNA dimethylallyltransferase, found in Anaplasma marginale (strain St. Maries).